Consider the following 295-residue polypeptide: MSWLSKLMPSGIRTENTPAKKRSVPEGLWEKCSNCGSALYGPELEENLEVCPKCDHHMAIRARARLAALFDLDSPTTEIAAQLGPVDVLKFKDQKKYGERIKASQKSSGEYDALIAMRGMLKGNPLVAAAFDFAFMGGSMGSVVGERFARAAEVALEVGCPFVCFSASGGARMQEGLFSLMQMAKTSAALGRLREAGLPYISVLTHPTTGGVSASFAMLGDINIAEPHALIGFAGPRVIEQTVRETLPEGFQRSEFLLDHGAIDQICDRRDMRDRIAELTTMMMRQPHPQDADAA.

Positions 1-20 are disordered; the sequence is MSWLSKLMPSGIRTENTPAK. The CoA carboxyltransferase N-terminal domain occupies 28–295; sequence LWEKCSNCGS…QPHPQDADAA (268 aa). Positions 32, 35, 51, and 54 each coordinate Zn(2+). A C4-type zinc finger spans residues 32 to 54; that stretch reads CSNCGSALYGPELEENLEVCPKC.

The protein belongs to the AccD/PCCB family. As to quaternary structure, acetyl-CoA carboxylase is a heterohexamer composed of biotin carboxyl carrier protein (AccB), biotin carboxylase (AccC) and two subunits each of ACCase subunit alpha (AccA) and ACCase subunit beta (AccD). Zn(2+) is required as a cofactor.

Its subcellular location is the cytoplasm. The enzyme catalyses N(6)-carboxybiotinyl-L-lysyl-[protein] + acetyl-CoA = N(6)-biotinyl-L-lysyl-[protein] + malonyl-CoA. Its pathway is lipid metabolism; malonyl-CoA biosynthesis; malonyl-CoA from acetyl-CoA: step 1/1. Component of the acetyl coenzyme A carboxylase (ACC) complex. Biotin carboxylase (BC) catalyzes the carboxylation of biotin on its carrier protein (BCCP) and then the CO(2) group is transferred by the transcarboxylase to acetyl-CoA to form malonyl-CoA. The sequence is that of Acetyl-coenzyme A carboxylase carboxyl transferase subunit beta from Xanthomonas campestris pv. campestris (strain 8004).